We begin with the raw amino-acid sequence, 1111 residues long: Receptor-type guanylate cyclase gcy-7 (1111 aa).

The N-terminal stretch at 1-24 (MKPFYSMSLVLFLVITLLPKPMFP) is a signal peptide. The Extracellular portion of the chain corresponds to 25-488 (QVATGTTGNV…CPKSFVDEYL (464 aa)). 8 N-linked (GlcNAc...) asparagine glycosylation sites follow: Asn80, Asn300, Asn326, Asn353, Asn389, Asn407, Asn430, and Asn441. A helical transmembrane segment spans residues 489–509 (IWVIVAIVVLFLAITAAACGI). At 510–1111 (YFSIQARRQE…TLKSDEQLSD (602 aa)) the chain is on the cytoplasmic side. The region spanning 536–838 (QINSKQKGKG…NDNLMDHVFN (303 aa)) is the Protein kinase domain. Residues 542–550 (KGKGEHSVR) and Lys568 each bind ATP. Residues 896–1026 (TIFFSDVVQF…DAVNTASRME (131 aa)) enclose the Guanylate cyclase domain.

It belongs to the adenylyl cyclase class-4/guanylyl cyclase family. As to expression, expressed asymmetrically in ASE left (ASEL) sensory neuron. Expressed in excretory canal cell.

The protein localises to the cell membrane. It catalyses the reaction GTP = 3',5'-cyclic GMP + diphosphate. In terms of biological role, guanylate cyclase involved in the production of the second messenger cGMP. Unlike other guanylate cyclases expressed in ASE neurons, may not play a role in chemotaxis responses toward salt ions in ASEL (ASE left) sensory neurons. The chain is Receptor-type guanylate cyclase gcy-7 from Caenorhabditis elegans.